The primary structure comprises 1607 residues: Abnormal cell migration protein 38 (1607 aa).

Disordered stretches follow at residues 14-52 (EFNKRADSPRAAGNYDFESGNIDNIPLNDDGPLSPSQDF), 67-93 (RLSPNGGLNREDQQPGPSGNNDGQYHV), 167-222 (STSY…AAQA), 326-425 (GSSA…PPSQ), 459-478 (SPNTNGPSSQLQRPQSGMDQ), 549-594 (MVHR…QHSY), 845-931 (YDEN…PETE), 1017-1061 (SVQV…DYDM), 1141-1241 (EPSP…VTPK), 1319-1378 (ETPN…KGQL), 1392-1445 (FANV…PQAV), and 1517-1607 (KVKT…STDP). Composition is skewed to polar residues over residues 81–93 (PGPSGNNDGQYHV) and 179–191 (PSGNSSSQINHQQ). A compositionally biased stretch (low complexity) spans 195 to 205 (VPQVQQQPAKP). Over residues 206 to 218 (KTTKKRPPPKKKT) the composition is skewed to basic residues. The segment covering 327-341 (SSASSSAQPSQPAKK) has biased composition (low complexity). Polar residues-rich tracts occupy residues 349-371 (VPNTAKNLAQNQQIMPPQAQITP) and 379-425 (PTTT…PPSQ). Residues 585-594 (NSHSQSQHSY) are compositionally biased toward low complexity. Residues 858–871 (EEPESESESEPEAE) are compositionally biased toward acidic residues. Basic and acidic residues-rich tracts occupy residues 872–886 (PEPKKDNFAEPEPAR) and 907–917 (YRNESESTFDW). Composition is skewed to low complexity over residues 1333-1354 (PNIPSTSTSIPPASTVVSSVSV), 1395-1419 (VPSSKPSTSSAVSATPSTSSAVSAK), and 1584-1601 (LLGTSNMNSSTNGSSSGL).

As to expression, expressed in gonad distal tip cells and gonad sheath cells.

It is found in the nucleus. The protein localises to the cytoplasm. Functionally, during gonad development, involved in distal tip cell (DTC) migration from the dorsal side of the hermaphrodite body to the midbody which allows for the formation of gonad arms. Role in gonad DTC migration may be in association with integrin related proteins ina-1 and mig-15. This Caenorhabditis elegans protein is Abnormal cell migration protein 38.